A 421-amino-acid chain; its full sequence is RNA exonuclease 4 (421 aa).

Disordered stretches follow at residues 1-51 (MAKA…ETKK) and 79-179 (ENQA…QPPK). Over residues 11–24 (SPCSGSLGKTANTP) the composition is skewed to polar residues. Residues 25–36 (KQKRKQKQRKFW) are compositionally biased toward basic residues. 3 stretches are compositionally biased toward basic and acidic residues: residues 92 to 107 (PKKD…EESV), 140 to 149 (AAEKSDEVSK), and 161 to 170 (DTEHQGKKPQ). Residues 234-385 (TVAMDCEMVG…QDAQAAMRLY (152 aa)) enclose the Exonuclease domain.

Belongs to the REXO4 family.

The protein resides in the nucleus. This Xenopus laevis (African clawed frog) protein is RNA exonuclease 4 (rexo4).